Reading from the N-terminus, the 194-residue chain is Type II restriction enzyme OkrAI (194 aa).

The Mg(2+) site is built by E71, D86, and W100. Catalysis depends on E101, which acts as the Proton acceptor.

In terms of assembly, homodimer. Requires Mg(2+) as cofactor.

It carries out the reaction Endonucleolytic cleavage of DNA to give specific double-stranded fragments with terminal 5'-phosphates.. A P subtype restriction enzyme that recognizes the double-stranded sequence 5'-GGATCC-3' and cleaves after G-1. This is Type II restriction enzyme OkrAI from Oceanobacter kriegii (Oceanospirillum kriegii).